A 511-amino-acid chain; its full sequence is MKHVPIVVLDFGSQYTQIIARKLREAGVYSEIVPYNEPIGDIVARTPKGIILSGGPASVYAVDAYHPDTTIFELGLPILGICYGMQLISQHFGGSVIPASHHEYGKAKLQFEVENPIFKDTQDGQIVWMSHGDRVENIPAGFEKIATSENSPFAAIADINRNIYAFQFHPEVYHSQEGSKLLKNFAKHICGCESTWNMGSFAKEQIKQIQDKVGNKKVLCAVSGGVDSSVVATLLAEAIGEQVIPVFVDNGLLRANEREQVETMFKSRGVNLITVDASETFLSKLAGVTDPEKKRKIIGETFIEVFDVEAKKHSGIEFLAQGTLYTDVIESVSVKGPSKTIKSHHNVGGLPDWMKFELIEPLREIFKDEVRALGLELGLPKSMISRHPFPGPGLAIRIMGEVNKPDLELLRKADVIMLDVLHSTGYYDKTWQAFTVLLNVKSVGVMGDNRTYDNTVCVRIVDATDGMTATFAHIPHEILETISRRIINEVDGINRVVYDISSKPPATIEWE.

The 191-residue stretch at 5-195 folds into the Glutamine amidotransferase type-1 domain; it reads PIVVLDFGSQ…AKHICGCEST (191 aa). C82 functions as the Nucleophile in the catalytic mechanism. Residues H169 and E171 contribute to the active site. The GMPS ATP-PPase domain occupies 196 to 386; it reads WNMGSFAKEQ…LGLPKSMISR (191 aa). 223-229 is a binding site for ATP; the sequence is SGGVDSS.

In terms of assembly, homodimer.

The enzyme catalyses XMP + L-glutamine + ATP + H2O = GMP + L-glutamate + AMP + diphosphate + 2 H(+). It participates in purine metabolism; GMP biosynthesis; GMP from XMP (L-Gln route): step 1/1. In terms of biological role, catalyzes the synthesis of GMP from XMP. The polypeptide is GMP synthase [glutamine-hydrolyzing] (Aliarcobacter butzleri (strain RM4018) (Arcobacter butzleri)).